Consider the following 457-residue polypeptide: MAKVAAIVLAAGKGTRMKSELVKVMHPLSGMPMISWPVNVVREAGAAVITLVVGHQSEKVREFFADQGDIVFASQEEQLGTGHAVACCSEALSGFTGAILILCGDVPLITPETLQTFLEYHYRQQAVITVLTTCMDNPYGYGRVIKDAAGHVTEIVEEKDASAEQRQINEINSGIYCVDAGFLFTAVADLKNDNAQKEYYLTDIIKTAVAERRTCCAFPIADPMEVMGVNDRVQLAEAGRIIRVRINKALMVAGTTIIDPETTYIDHGVVVGRDTTIYPNVCISGGTVIGDNCVIESSAVIKGCKVGDCVTIKAGSVMEDSVIGNTVAIGPMAHLRSGTELRDEVKIGNFVETKKIIMGAGSKASHLTYLGDATIGSHVNIGCGTITCNYDGVKKHRTVIEDDVFVGSDVQFVAPVSIGRNSLIAAGTTVTKDVPPDSLAIARAPQVNKEGWKLKNK.

Residues 1 to 232 (MAKVAAIVLA…PMEVMGVNDR (232 aa)) are pyrophosphorylase. UDP-N-acetyl-alpha-D-glucosamine contacts are provided by residues 9 to 12 (LAAG), K23, Q75, and 80 to 81 (GT). Mg(2+) is bound at residue D105. G142, E157, N172, and N230 together coordinate UDP-N-acetyl-alpha-D-glucosamine. N230 serves as a coordination point for Mg(2+). A linker region spans residues 233 to 253 (VQLAEAGRIIRVRINKALMVA). The segment at 254–457 (GTTIIDPETT…NKEGWKLKNK (204 aa)) is N-acetyltransferase. R336 and K354 together coordinate UDP-N-acetyl-alpha-D-glucosamine. H366 (proton acceptor) is an active-site residue. UDP-N-acetyl-alpha-D-glucosamine contacts are provided by Y369 and N380. Acetyl-CoA contacts are provided by residues 389 to 390 (NY), S408, A426, and R443.

In the N-terminal section; belongs to the N-acetylglucosamine-1-phosphate uridyltransferase family. The protein in the C-terminal section; belongs to the transferase hexapeptide repeat family. In terms of assembly, homotrimer. It depends on Mg(2+) as a cofactor.

The protein resides in the cytoplasm. It catalyses the reaction alpha-D-glucosamine 1-phosphate + acetyl-CoA = N-acetyl-alpha-D-glucosamine 1-phosphate + CoA + H(+). The enzyme catalyses N-acetyl-alpha-D-glucosamine 1-phosphate + UTP + H(+) = UDP-N-acetyl-alpha-D-glucosamine + diphosphate. It participates in nucleotide-sugar biosynthesis; UDP-N-acetyl-alpha-D-glucosamine biosynthesis; N-acetyl-alpha-D-glucosamine 1-phosphate from alpha-D-glucosamine 6-phosphate (route II): step 2/2. It functions in the pathway nucleotide-sugar biosynthesis; UDP-N-acetyl-alpha-D-glucosamine biosynthesis; UDP-N-acetyl-alpha-D-glucosamine from N-acetyl-alpha-D-glucosamine 1-phosphate: step 1/1. The protein operates within bacterial outer membrane biogenesis; LPS lipid A biosynthesis. Catalyzes the last two sequential reactions in the de novo biosynthetic pathway for UDP-N-acetylglucosamine (UDP-GlcNAc). The C-terminal domain catalyzes the transfer of acetyl group from acetyl coenzyme A to glucosamine-1-phosphate (GlcN-1-P) to produce N-acetylglucosamine-1-phosphate (GlcNAc-1-P), which is converted into UDP-GlcNAc by the transfer of uridine 5-monophosphate (from uridine 5-triphosphate), a reaction catalyzed by the N-terminal domain. This Geotalea daltonii (strain DSM 22248 / JCM 15807 / FRC-32) (Geobacter daltonii) protein is Bifunctional protein GlmU.